We begin with the raw amino-acid sequence, 229 residues long: Potassium/proton antiporter CemA (229 aa).

3 helical membrane passes run 7–27 (FTPL…SFSV), 107–127 (ILHF…SILG), and 189–209 (IISG…KYWI).

Belongs to the CemA family.

It localises to the plastid. Its subcellular location is the chloroplast inner membrane. The enzyme catalyses K(+)(in) + H(+)(out) = K(+)(out) + H(+)(in). Functionally, contributes to K(+)/H(+) antiport activity by supporting proton efflux to control proton extrusion and homeostasis in chloroplasts in a light-dependent manner to modulate photosynthesis. Prevents excessive induction of non-photochemical quenching (NPQ) under continuous-light conditions. Indirectly promotes efficient inorganic carbon uptake into chloroplasts. In Nicotiana tomentosiformis (Tobacco), this protein is Potassium/proton antiporter CemA.